A 523-amino-acid polypeptide reads, in one-letter code: Pituitary adenylate cyclase-activating polypeptide type I receptor (523 aa).

The signal sequence occupies residues 1–19 (MARVLQLSLTALLLPVAIA). Over 20–151 (MHSDCIFKKE…SGDQDYYYLS (132 aa)) the chain is Extracellular. 3 disulfide bridges follow: Cys33–Cys62, Cys53–Cys117, and Cys76–Cys133. 3 N-linked (GlcNAc...) asparagine glycosylation sites follow: Asn47, Asn59, and Asn116. The interval 124–138 (EPFPHYFDACGFDDY) is important for ADCYAP1/PACAP ligand binding and specificity. The interval 124–138 (EPFPHYFDACGFDDY) is important for ligand binding and specificity. Residues 152 to 176 (VKALYTVGYSTSLATLTTAMVILCR) traverse the membrane as a helical segment. The Cytoplasmic segment spans residues 177–186 (FRKLHCTRNF). The helical transmembrane segment at 187 to 207 (IHMNLFVSFMLRAISVFIKDW) threads the bilayer. The Extracellular segment spans residues 208 to 222 (ILYAEQDSSHCFVST). A helical transmembrane segment spans residues 223-248 (VECKAVMVFFHYCVVSNYFWLFIEGL). Cys225 and Cys295 are oxidised to a cystine. The Cytoplasmic segment spans residues 249–266 (YLFTLLVETFFPERRYFY). A helical membrane pass occupies residues 267 to 289 (WYTIIGWGTPTVCVTVWAVLRLY). Over 290–301 (FDDAGCWDMNDS) the chain is Extracellular. A helical membrane pass occupies residues 302-328 (TALWWVIKGPVVGSIMVNFVLFIGIII). At 329-346 (ILVQKLQSPDMGGNESSI) the chain is on the cytoplasmic side. The chain crosses the membrane as a helical span at residues 347 to 429 (YLTNLRLRVP…HYTVFAFSPE (83 aa)). Over 430 to 434 (NVSKR) the chain is Extracellular. Residues 435-458 (ERLVFELGLGSFQGFVVAVLYCFL) form a helical membrane-spanning segment. Residues 459–523 (NGEVQAEIKR…SSLPADNLAT (65 aa)) lie on the Cytoplasmic side of the membrane. Phosphoserine occurs at positions 489 and 502.

This sequence belongs to the G-protein coupled receptor 2 family. Interacts with maxadilan, a vasodilator peptide from Lutzomyia longipalpis saliva; the interaction results in ADCYAP1R1 activation. As to expression, hypothalamus, anterior pituitary, adrenal medulla, testicular germ cells.

The protein localises to the cell membrane. Its function is as follows. G protein-coupled receptor activated by the neuropeptide pituitary adenylate cyclase-activating polypeptide (ADCYAP1/PACAP). Binds both PACAP27 and PACAP38 bioactive peptides. Ligand binding causes a conformation change that triggers signaling via guanine nucleotide-binding proteins (G proteins) and modulates the activity of downstream effectors. Activates cAMP-dependent pathway. May regulate the release of adrenocorticotropin, luteinizing hormone, growth hormone, prolactin, epinephrine, and catecholamine. May play a role in spermatogenesis and sperm motility. Causes smooth muscle relaxation and secretion in the gastrointestinal tract. The protein is Pituitary adenylate cyclase-activating polypeptide type I receptor of Rattus norvegicus (Rat).